The following is a 209-amino-acid chain: Orotate phosphoribosyltransferase (209 aa).

Residues Arg-96, Lys-100, His-102, and 122-130 each bind 5-phospho-alpha-D-ribose 1-diphosphate; that span reads EDLISTGGS. Ser-126 is a binding site for orotate.

It belongs to the purine/pyrimidine phosphoribosyltransferase family. PyrE subfamily. In terms of assembly, homodimer. Mg(2+) is required as a cofactor.

The enzyme catalyses orotidine 5'-phosphate + diphosphate = orotate + 5-phospho-alpha-D-ribose 1-diphosphate. Its pathway is pyrimidine metabolism; UMP biosynthesis via de novo pathway; UMP from orotate: step 1/2. In terms of biological role, catalyzes the transfer of a ribosyl phosphate group from 5-phosphoribose 1-diphosphate to orotate, leading to the formation of orotidine monophosphate (OMP). The chain is Orotate phosphoribosyltransferase from Listeria monocytogenes serovar 1/2a (strain ATCC BAA-679 / EGD-e).